The following is a 221-amino-acid chain: Glutathione peroxidase 6 (221 aa).

A signal peptide spans 1 to 19 (MAQKLWGSCLFSLFMAALA). Residue Cys-73 is part of the active site.

The protein belongs to the glutathione peroxidase family.

The protein localises to the secreted. It catalyses the reaction 2 glutathione + H2O2 = glutathione disulfide + 2 H2O. The sequence is that of Glutathione peroxidase 6 (Gpx6) from Mus musculus (Mouse).